The chain runs to 275 residues: S-methyl-5'-thioadenosine phosphorylase (275 aa).

Phosphate is bound by residues serine 20, arginine 62 to histidine 63, and serine 95 to alanine 96. 3 disulfide bridges follow: cysteine 143–cysteine 210, cysteine 205–cysteine 266, and cysteine 264–cysteine 267. Residue methionine 195 coordinates substrate. Threonine 196 is a phosphate binding site. Aspartate 219–aspartate 221 provides a ligand contact to substrate.

Belongs to the PNP/MTAP phosphorylase family. MTAP subfamily. Homohexamer. Dimer of a homotrimer.

It carries out the reaction S-methyl-5'-thioadenosine + phosphate = 5-(methylsulfanyl)-alpha-D-ribose 1-phosphate + adenine. It functions in the pathway amino-acid biosynthesis; L-methionine biosynthesis via salvage pathway; S-methyl-5-thio-alpha-D-ribose 1-phosphate from S-methyl-5'-thioadenosine (phosphorylase route): step 1/1. Functionally, catalyzes the reversible phosphorylation of S-methyl-5'-thioadenosine (MTA) to adenine and 5-methylthioribose-1-phosphate. Involved in the breakdown of MTA, a major by-product of polyamine biosynthesis. Responsible for the first step in the methionine salvage pathway after MTA has been generated from S-adenosylmethionine. Has broad substrate specificity with 6-aminopurine nucleosides as preferred substrates. In Aeropyrum pernix (strain ATCC 700893 / DSM 11879 / JCM 9820 / NBRC 100138 / K1), this protein is S-methyl-5'-thioadenosine phosphorylase.